The sequence spans 205 residues: Probable GTP-binding protein EngB (205 aa).

One can recognise an EngB-type G domain in the interval 8–195 (RDAEVVLIGR…NEAVRHHLHE (188 aa)). GTP-binding positions include 16–23 (GRSNVGKS), 41–45 (GVTRS), 60–63 (DLPG), 140–143 (NKMD), and 175–177 (ISA). Mg(2+)-binding residues include Ser-23 and Thr-43.

Belongs to the TRAFAC class TrmE-Era-EngA-EngB-Septin-like GTPase superfamily. EngB GTPase family. The cofactor is Mg(2+).

Functionally, necessary for normal cell division and for the maintenance of normal septation. The chain is Probable GTP-binding protein EngB from Haloarcula marismortui (strain ATCC 43049 / DSM 3752 / JCM 8966 / VKM B-1809) (Halobacterium marismortui).